The following is a 715-amino-acid chain: Fatty acid oxidation complex subunit alpha (715 aa).

The segment at 1 to 190 (MTTTSAFMLS…KAGLVDDVVP (190 aa)) is enoyl-CoA hydratase. The segment at 306-714 (GPLNSVGILG…FWTNGETDQG (409 aa)) is 3-hydroxyacyl-CoA dehydrogenase.

The protein in the N-terminal section; belongs to the enoyl-CoA hydratase/isomerase family. It in the central section; belongs to the 3-hydroxyacyl-CoA dehydrogenase family. In terms of assembly, heterotetramer of two alpha chains (FadJ) and two beta chains (FadI).

It is found in the cytoplasm. The enzyme catalyses a (3S)-3-hydroxyacyl-CoA = a (2E)-enoyl-CoA + H2O. It catalyses the reaction a 4-saturated-(3S)-3-hydroxyacyl-CoA = a (3E)-enoyl-CoA + H2O. The catalysed reaction is a (3S)-3-hydroxyacyl-CoA + NAD(+) = a 3-oxoacyl-CoA + NADH + H(+). It carries out the reaction (3S)-3-hydroxybutanoyl-CoA = (3R)-3-hydroxybutanoyl-CoA. It participates in lipid metabolism; fatty acid beta-oxidation. Its function is as follows. Catalyzes the formation of a hydroxyacyl-CoA by addition of water on enoyl-CoA. Also exhibits 3-hydroxyacyl-CoA epimerase and 3-hydroxyacyl-CoA dehydrogenase activities. This Salmonella typhi protein is Fatty acid oxidation complex subunit alpha.